The following is a 290-amino-acid chain: L-cysteine S-thiosulfotransferase subunit SoxA (290 aa).

The first 26 residues, 1 to 26 (MPRFTKTKGTLAATALGLALAGAAFA), serve as a signal peptide directing secretion. The Zn(2+) site is built by aspartate 78 and aspartate 81. The region spanning 78-171 (DDFDNPAMVF…DMLSLISLQS (94 aa)) is the Cytochrome c domain. Heme c-binding residues include cysteine 106, cysteine 109, histidine 110, and cysteine 143. Histidine 190 lines the Zn(2+) pocket. 3 residues coordinate heme c: cysteine 206, cysteine 209, and histidine 210. Position 247 (arginine 247) interacts with substrate. Cysteine 251 contacts heme c. Cysteine 251 functions as the Cysteine persulfide intermediate in the catalytic mechanism. Aspartate 266 contributes to the Zn(2+) binding site.

Belongs to the SoxA family. In terms of assembly, heterodimer of SoxA and SoxX. It depends on heme c as a cofactor. Zn(2+) is required as a cofactor. Cysteine persulfide at Cys-251.

It is found in the periplasm. The enzyme catalyses L-cysteinyl-[SoxY protein] + thiosulfate + 2 Fe(III)-[cytochrome c] = S-sulfosulfanyl-L-cysteinyl-[SoxY protein] + 2 Fe(II)-[cytochrome c] + 2 H(+). It carries out the reaction S-sulfanyl-L-cysteinyl-[SoxY protein] + thiosulfate + 2 Fe(III)-[cytochrome c] = S-(2-sulfodisulfanyl)-L-cysteinyl-[SoxY protein] + 2 Fe(II)-[cytochrome c] + 2 H(+). Functionally, C-type diheme cytochrome, which is part of the SoxAX cytochrome complex involved in sulfur oxidation. The SoxAX complex catalyzes the formation of a heterodisulfide bond between the conserved cysteine residue on a sulfur carrier SoxYZ complex subunit SoxY and thiosulfate or other inorganic sulfur substrates. This leads to the liberation of two electrons, which may be transferred from the SoxAX complex to another cytochrome c that then channels them into the respiratory electron transport chain. Some electrons may be used for reductive CO(2) fixation. This chain is L-cysteine S-thiosulfotransferase subunit SoxA, found in Paracoccus pantotrophus (Thiosphaera pantotropha).